A 686-amino-acid polypeptide reads, in one-letter code: XK-related protein 5 (686 aa).

Helical transmembrane passes span 33–53 (LLWGWLALAVLLPGFLVQALS), 205–225 (HFWVFVVAGAHWLVMTFWLVA), 239–259 (LFNLLVGAVYILCYLSFWDSP), 265–285 (VTFYMVMLLENIILLLLATDF), and 297–317 (IAGVLSGFLIGSVSLVIYYSL). Disordered regions lie at residues 339–387 (GDKT…PPEA), 448–468 (ALSAQQELPSSSRDPSTLENS), and 490–592 (FASD…APFP). The span at 340–359 (DKTERRDSPRATDLAGKRTE) shows a compositional bias: basic and acidic residues. Polar residues-rich tracts occupy residues 450–468 (SAQQELPSSSRDPSTLENS) and 490–509 (FASDQQDEAPTQNPAATQGE). Gly residues predominate over residues 523–536 (QGKGTGGQQRGGEG). The segment covering 550–567 (VATSSQQEGSPATLQTAH) has biased composition (polar residues).

The protein belongs to the XK family.

The protein localises to the cell membrane. This Homo sapiens (Human) protein is XK-related protein 5.